Consider the following 593-residue polypeptide: ATPase family AAA domain-containing protein 3-A (593 aa).

The disordered stretch occupies residues 1-64; that stretch reads MSWLFGLNKG…AKAARELDQS (64 aa). Residues 1–242 are Mitochondrial intermembrane-facing; that stretch reads MSWLFGLNKG…FRTFISDWDK (242 aa). Over residues 15–27 the composition is skewed to pro residues; it reads PGVPGFPEPPSPP. 2 stretches are compositionally biased toward basic and acidic residues: residues 33–44 and 53–64; these read GGDKNKPKDKWS and RAAKAARELDQS. The stretch at 52–215 forms a coiled coil; the sequence is ERAAKAAREL…QIRLKAAEHR (164 aa). A helical membrane pass occupies residues 243–260; it reads VTATVAGLTLLAVGVYTA. Residues 261–593 lie on the Mitochondrial matrix side of the membrane; sequence KNATGVAGRY…LQPLLEGTQV (333 aa). 348 to 355 is an ATP binding site; sequence GPPGTGKT.

Belongs to the AAA ATPase family. Can form homooligomers. Homodimer formation at the N-terminus may be regulated by ATP and is required for the interaction with the inner surface of the mitochondrial outer membrane and correct mitochondrial homeostasis.

The protein resides in the mitochondrion inner membrane. It is found in the mitochondrion matrix. It localises to the mitochondrion nucleoid. The enzyme catalyses ATP + H2O = ADP + phosphate + H(+). Its function is as follows. Essential for mitochondrial network organization, mitochondrial metabolism and cell growth at organism and cellular level. May play an important role in mitochondrial protein synthesis. May also participate in mitochondrial DNA replication. May bind to mitochondrial DNA D-loops and contribute to nucleoid stability. Required for enhanced channeling of cholesterol for hormone-dependent steroidogenesis. Involved in mitochondrial-mediated antiviral innate immunity. Required to protect mitochondria from the PERK-mediated unfolded protein response: specifically inhibits the activity of EIF2AK3/PERK at mitochondria-endoplasmic reticulum contact sites, thereby providing a safe haven for mitochondrial protein translation during endoplasmic reticulum stress. Ability to inhibit EIF2AK3/PERK is independent of its ATPase activity. Also involved in the mitochondrial DNA damage response by promoting signaling between damaged genomes and the mitochondrial membrane, leading to activation of the integrated stress response (ISR). This chain is ATPase family AAA domain-containing protein 3-A (atad3-a), found in Xenopus laevis (African clawed frog).